Here is a 295-residue protein sequence, read N- to C-terminus: Protease HtpX (295 aa).

2 helical membrane-spanning segments follow: residues 4–24 and 41–61; these read ILLF…TLSL and SSLL…SLFI. His147 contacts Zn(2+). Glu148 is an active-site residue. His151 contributes to the Zn(2+) binding site. 2 consecutive transmembrane segments (helical) span residues 158-178 and 199-219; these read VTLA…ARII and VATI…VMWF. Residue Glu224 participates in Zn(2+) binding.

This sequence belongs to the peptidase M48B family. Zn(2+) serves as cofactor.

Its subcellular location is the cell inner membrane. The polypeptide is Protease HtpX (Pseudomonas putida (strain ATCC 700007 / DSM 6899 / JCM 31910 / BCRC 17059 / LMG 24140 / F1)).